The sequence spans 252 residues: Chitooligosaccharide deacetylase (252 aa).

The Mg(2+) site is built by His61 and His125.

The protein belongs to the YdjC deacetylase family. ChbG subfamily. Homodimer. Mg(2+) serves as cofactor.

It localises to the cytoplasm. It catalyses the reaction N,N'-diacetylchitobiose + H2O = N-acetyl-beta-D-glucosaminyl-(1-&gt;4)-D-glucosamine + acetate. It carries out the reaction diacetylchitobiose-6'-phosphate + H2O = N'-monoacetylchitobiose-6'-phosphate + acetate. Its pathway is glycan degradation; chitin degradation. Its function is as follows. Involved in the degradation of chitin. ChbG is essential for growth on the acetylated chitooligosaccharides chitobiose and chitotriose but is dispensable for growth on cellobiose and chitosan dimer, the deacetylated form of chitobiose. Deacetylation of chitobiose-6-P and chitotriose-6-P is necessary for both the activation of the chb promoter by the regulatory protein ChbR and the hydrolysis of phosphorylated beta-glucosides by the phospho-beta-glucosidase ChbF. Catalyzes the removal of only one acetyl group from chitobiose-6-P to yield monoacetylchitobiose-6-P, the inducer of ChbR and the substrate of ChbF. The sequence is that of Chitooligosaccharide deacetylase from Salmonella paratyphi A (strain ATCC 9150 / SARB42).